We begin with the raw amino-acid sequence, 296 residues long: Chelated iron transport system membrane protein YfeB (296 aa).

An ABC transporter domain is found at 11–246; it reads LVVDNVTVTY…NLEMTFGGVL (236 aa). 44–51 contributes to the ATP binding site; sequence GVNGSGKS. The segment at 276 to 296 is disordered; it reads VFYGHTKNDPPAQSQSKEQNS. The span at 286-296 shows a compositional bias: polar residues; that stretch reads PAQSQSKEQNS.

The protein belongs to the ABC transporter superfamily.

Its subcellular location is the cell inner membrane. Its function is as follows. Part of an ATP-driven transport system YfeABCD for chelated iron. This chain is Chelated iron transport system membrane protein YfeB (yfeB), found in Yersinia pestis.